We begin with the raw amino-acid sequence, 133 residues long: Ribonuclease P protein component (133 aa).

It belongs to the RnpA family. Consists of a catalytic RNA component (M1 or rnpB) and a protein subunit.

It catalyses the reaction Endonucleolytic cleavage of RNA, removing 5'-extranucleotides from tRNA precursor.. RNaseP catalyzes the removal of the 5'-leader sequence from pre-tRNA to produce the mature 5'-terminus. It can also cleave other RNA substrates such as 4.5S RNA. The protein component plays an auxiliary but essential role in vivo by binding to the 5'-leader sequence and broadening the substrate specificity of the ribozyme. This is Ribonuclease P protein component from Pseudomonas putida (strain ATCC 47054 / DSM 6125 / CFBP 8728 / NCIMB 11950 / KT2440).